The sequence spans 471 residues: Alkaline phosphatase (471 aa).

The first 21 residues, 1–21 (MKQSTIALALLPLLFTPVTKA), serve as a signal peptide directing secretion. Asp-73 is a Mg(2+) binding site. Residue Asp-73 coordinates Zn(2+). Residue Ser-124 is the Phosphoserine intermediate of the active site. Residues Asp-175 and Thr-177 each contribute to the Mg(2+) site. 2 cysteine pairs are disulfide-bonded: Cys-190-Cys-200 and Cys-308-Cys-358. Mg(2+) is bound at residue Glu-344. Zn(2+) is bound by residues Asp-349, His-353, Asp-391, His-392, and His-434.

It belongs to the alkaline phosphatase family. Isozymes 1 and 3 are a dimer of identical chains, isozyme 2 is a dimer of heterogeneous chains, one of each of the subunits from isozymes 1 and 3. Mg(2+) serves as cofactor. The cofactor is Zn(2+).

It is found in the periplasm. It catalyses the reaction a phosphate monoester + H2O = an alcohol + phosphate. This chain is Alkaline phosphatase (phoA), found in Escherichia coli (strain K12).